A 155-amino-acid polypeptide reads, in one-letter code: Ribosome maturation factor RimP (155 aa).

The protein belongs to the RimP family.

The protein resides in the cytoplasm. Required for maturation of 30S ribosomal subunits. The chain is Ribosome maturation factor RimP from Hamiltonella defensa subsp. Acyrthosiphon pisum (strain 5AT).